Reading from the N-terminus, the 64-residue chain is Large ribosomal subunit protein bL35 (64 aa).

Residues 1–44 (MPKLKTNRGAAKRFKVKASGRISRARSNHSHILTKKDPKRKRRL) are disordered. Over residues 10–44 (AAKRFKVKASGRISRARSNHSHILTKKDPKRKRRL) the composition is skewed to basic residues.

Belongs to the bacterial ribosomal protein bL35 family.

This is Large ribosomal subunit protein bL35 from Halorhodospira halophila (strain DSM 244 / SL1) (Ectothiorhodospira halophila (strain DSM 244 / SL1)).